A 228-amino-acid polypeptide reads, in one-letter code: Triosephosphate isomerase (228 aa).

Position 9–11 (9–11 (NFK)) interacts with substrate. Catalysis depends on His93, which acts as the Electrophile. Glu141 (proton acceptor) is an active-site residue. Residues Ile146, Gly180, and 201-202 (AS) each bind substrate.

The protein belongs to the triosephosphate isomerase family. Homotetramer; dimer of dimers.

Its subcellular location is the cytoplasm. The enzyme catalyses D-glyceraldehyde 3-phosphate = dihydroxyacetone phosphate. It functions in the pathway carbohydrate biosynthesis; gluconeogenesis. It participates in carbohydrate degradation; glycolysis; D-glyceraldehyde 3-phosphate from glycerone phosphate: step 1/1. Involved in the gluconeogenesis. Catalyzes stereospecifically the conversion of dihydroxyacetone phosphate (DHAP) to D-glyceraldehyde-3-phosphate (G3P). The polypeptide is Triosephosphate isomerase (Metallosphaera sedula (strain ATCC 51363 / DSM 5348 / JCM 9185 / NBRC 15509 / TH2)).